We begin with the raw amino-acid sequence, 91 residues long: Cell division topological specificity factor (91 aa).

This sequence belongs to the MinE family.

In terms of biological role, prevents the cell division inhibition by proteins MinC and MinD at internal division sites while permitting inhibition at polar sites. This ensures cell division at the proper site by restricting the formation of a division septum at the midpoint of the long axis of the cell. The polypeptide is Cell division topological specificity factor (Chloroflexus aurantiacus (strain ATCC 29366 / DSM 635 / J-10-fl)).